The sequence spans 810 residues: Probable inorganic carbon transporter subunit DabA (810 aa).

Zn(2+) contacts are provided by Cys347, Asp349, His509, and Cys524.

It belongs to the inorganic carbon transporter (TC 9.A.2) DabA family. Forms a complex with DabB. Requires Zn(2+) as cofactor.

It localises to the cell inner membrane. Functionally, part of an energy-coupled inorganic carbon pump. This chain is Probable inorganic carbon transporter subunit DabA, found in Marinomonas sp. (strain MWYL1).